Consider the following 464-residue polypeptide: ATP synthase subunit beta (464 aa).

148–155 (GGAGVGKT) contributes to the ATP binding site.

The protein belongs to the ATPase alpha/beta chains family. F-type ATPases have 2 components, CF(1) - the catalytic core - and CF(0) - the membrane proton channel. CF(1) has five subunits: alpha(3), beta(3), gamma(1), delta(1), epsilon(1). CF(0) has three main subunits: a(1), b(2) and c(9-12). The alpha and beta chains form an alternating ring which encloses part of the gamma chain. CF(1) is attached to CF(0) by a central stalk formed by the gamma and epsilon chains, while a peripheral stalk is formed by the delta and b chains.

Its subcellular location is the cell inner membrane. It carries out the reaction ATP + H2O + 4 H(+)(in) = ADP + phosphate + 5 H(+)(out). Functionally, produces ATP from ADP in the presence of a proton gradient across the membrane. The catalytic sites are hosted primarily by the beta subunits. In Acinetobacter baylyi (strain ATCC 33305 / BD413 / ADP1), this protein is ATP synthase subunit beta.